The chain runs to 116 residues: Ribosome-binding factor A (116 aa).

The protein belongs to the RbfA family. Monomer. Binds 30S ribosomal subunits, but not 50S ribosomal subunits or 70S ribosomes.

The protein resides in the cytoplasm. Its function is as follows. One of several proteins that assist in the late maturation steps of the functional core of the 30S ribosomal subunit. Associates with free 30S ribosomal subunits (but not with 30S subunits that are part of 70S ribosomes or polysomes). Required for efficient processing of 16S rRNA. May interact with the 5'-terminal helix region of 16S rRNA. The sequence is that of Ribosome-binding factor A from Pediococcus pentosaceus (strain ATCC 25745 / CCUG 21536 / LMG 10740 / 183-1w).